The sequence spans 557 residues: Vacuolar protein sorting-associated protein 30 (557 aa).

2 disordered regions span residues 93–149 and 218–238; these read DDDN…ENQQ and NKEI…SEKE. Over residues 135–147 the composition is skewed to acidic residues; it reads DEEEQEATDEDEN. T142 carries the phosphothreonine modification. A coiled-coil region spans residues 189–322; it reads LINRLKSEYD…QLDKLRKINI (134 aa). The tract at residues 320 to 539 is BARA; the sequence is INIFNATFKI…LAFSSNLLSK (220 aa). Residues 515 to 540 are required for membrane-association, autophagic function during starvation and normal autophagosome morphology; it reads WTTAMKFLLTNVKWLLAFSSNLLSKS.

This sequence belongs to the beclin family. In terms of assembly, component of the autophagy-specific VPS34 PI3-kinase complex I composed of VPS15, VPS30, VPS34, ATG14 and ATG38; and of the VPS34 PI3-kinase complex II composed of VPS15, VPS30, VPS34 and VPS38.

It is found in the endosome membrane. The protein resides in the vacuole membrane. The protein localises to the preautophagosomal structure membrane. Its function is as follows. Required for cytoplasm to vacuole transport (Cvt), autophagy, nucleophagy, and mitophagy, as a part of the autophagy-specific VPS34 PI3-kinase complex I. This complex is essential to recruit the ATG8-phosphatidylinositol conjugate and the ATG12-ATG5 conjugate to the pre-autophagosomal structure. Also involved in endosome-to-Golgi retrograde transport as part of the VPS34 PI3-kinase complex II. This second complex is required for the endosome-to-Golgi retrieval of PEP1 and KEX2, and the recruitment of VPS5 and VPS7, two components of the retromer complex, to endosomal membranes (probably through the synthesis of a specific pool of phosphatidylinositol 3-phosphate recruiting the retromer to the endosomes). Also plays a role in regulation of filamentous growth. This chain is Vacuolar protein sorting-associated protein 30, found in Saccharomyces cerevisiae (strain ATCC 204508 / S288c) (Baker's yeast).